We begin with the raw amino-acid sequence, 65 residues long: Large ribosomal subunit protein bL33c (65 aa).

This sequence belongs to the bacterial ribosomal protein bL33 family.

The protein resides in the plastid. The protein localises to the chloroplast. This is Large ribosomal subunit protein bL33c from Gracilaria tenuistipitata var. liui (Red alga).